We begin with the raw amino-acid sequence, 98 residues long: NADH-ubiquinone oxidoreductase chain 4L (98 aa).

3 helical membrane-spanning segments follow: residues 1-21, 29-49, and 59-79; these read MLSINLNLIVAFLLALMGVLI, TLLCLEGMMLSLFILMTLLIT, and TPLILLVFSACEAAIGLALLV.

The protein belongs to the complex I subunit 4L family. Core subunit of respiratory chain NADH dehydrogenase (Complex I) which is composed of 45 different subunits.

The protein resides in the mitochondrion inner membrane. It carries out the reaction a ubiquinone + NADH + 5 H(+)(in) = a ubiquinol + NAD(+) + 4 H(+)(out). Functionally, core subunit of the mitochondrial membrane respiratory chain NADH dehydrogenase (Complex I) which catalyzes electron transfer from NADH through the respiratory chain, using ubiquinone as an electron acceptor. Part of the enzyme membrane arm which is embedded in the lipid bilayer and involved in proton translocation. In Sminthopsis crassicaudata (Fat-tailed dunnart), this protein is NADH-ubiquinone oxidoreductase chain 4L (MT-ND4L).